A 962-amino-acid chain; its full sequence is Protein lin-36 (962 aa).

Disordered stretches follow at residues 1–53 (MSEE…ETEG) and 74–99 (TSSG…PREE). Residues 23–40 (DSHVTVHSVEQDSQHSGE) show a composition bias toward basic and acidic residues. Polar residues predominate over residues 74–95 (TSSGEVLDESQVTPTKQASSSQ). The THAP-type zinc finger occupies 161-249 (LTHKPCTVCN…IEAFGVPVAI (89 aa)). 2 stretches are compositionally biased toward basic and acidic residues: residues 452 to 472 (KAEE…KHAE) and 534 to 570 (SHEE…DEQF). Disordered regions lie at residues 452-575 (KAEE…KMVQ), 612-676 (IAAT…PEER), 744-788 (QEKG…SASS), and 932-962 (DPKW…DSQQ). A compositionally biased stretch (low complexity) spans 626 to 637 (SSEQTPEPTTSQ). Basic and acidic residues predominate over residues 647 to 658 (KTKESAVQKVEK). Positions 939–951 (QQQQQQQQQQQEQ) are enriched in low complexity. Polar residues predominate over residues 952–962 (FPGQGSSDSQQ).

Expressed in vulval precursor P(3-8).p cells and their descendants, neurons of the head, tail and ventral cord, hypodermal and intestinal cells and germline cells.

The protein localises to the nucleus. Its function is as follows. Required to negatively regulate vulval development. Antagonizes Ras-mediated vulval induction. Acts cell autonomously. This chain is Protein lin-36 (lin-36), found in Caenorhabditis elegans.